The sequence spans 209 residues: Large ribosomal subunit protein uL3 (209 aa).

At Gln150 the chain carries N5-methylglutamine.

This sequence belongs to the universal ribosomal protein uL3 family. As to quaternary structure, part of the 50S ribosomal subunit. Forms a cluster with proteins L14 and L19. Methylated by PrmB.

Functionally, one of the primary rRNA binding proteins, it binds directly near the 3'-end of the 23S rRNA, where it nucleates assembly of the 50S subunit. The protein is Large ribosomal subunit protein uL3 of Vibrio parahaemolyticus serotype O3:K6 (strain RIMD 2210633).